Reading from the N-terminus, the 466-residue chain is MLHKSVLGLVLAAGMGTRMRSNQSKALQMIGGKPMIAHLLASMQETNLLTHQAIVYGYRGEALQAALKADFPNVFWVKQEQQLGTGDAVKSATALIEQHDLTLIAFADIPLIRPHTLQQLLHSAAQHGFAILTAQMENPFGYGRIIHDETGGVCAIVEEKDANREQKNIREINVGVMAVKQEWLLTYLPRLENHNAQGEFYLSDLVELIARDGHFIESFCLESADEAMGANDRAQLAALEAVYRQRKVQELFAQGVTLIDPNRIDIHGTVIAGADVVIEPNVFLKGTVVIGDGVTIESGCCLKDCEIGRNTIIRSHSVIDTATIGAQADIGPFARIRPQTVIADGGKIGNFVEIKAAKIGQESKVNHLSYIGDAHIGAKVNVGAGTITCNYDGAAKHPTFIGDHVFIGSNTALVAPVTIKNGATIGAGSVITRDVAADTLALTRPKLTQIEHWRRPQKKKEHKNDA.

Positions 1-233 are pyrophosphorylase; the sequence is MLHKSVLGLV…ADEAMGANDR (233 aa). Residues 11-14, lysine 25, glutamine 79, and 84-85 contribute to the UDP-N-acetyl-alpha-D-glucosamine site; these read LAAG and GT. Residue aspartate 108 coordinates Mg(2+). Residues glycine 143, glutamate 158, asparagine 173, and asparagine 231 each coordinate UDP-N-acetyl-alpha-D-glucosamine. Mg(2+) is bound at residue asparagine 231. A linker region spans residues 234 to 254; the sequence is AQLAALEAVYRQRKVQELFAQ. The interval 255–466 is N-acetyltransferase; sequence GVTLIDPNRI…QKKKEHKNDA (212 aa). UDP-N-acetyl-alpha-D-glucosamine-binding residues include arginine 337 and lysine 355. Catalysis depends on histidine 367, which acts as the Proton acceptor. Positions 370 and 381 each coordinate UDP-N-acetyl-alpha-D-glucosamine. Acetyl-CoA is bound by residues alanine 384, 390–391, serine 409, alanine 427, and arginine 444; that span reads NY.

In the N-terminal section; belongs to the N-acetylglucosamine-1-phosphate uridyltransferase family. The protein in the C-terminal section; belongs to the transferase hexapeptide repeat family. As to quaternary structure, homotrimer. It depends on Mg(2+) as a cofactor.

It localises to the cytoplasm. The catalysed reaction is alpha-D-glucosamine 1-phosphate + acetyl-CoA = N-acetyl-alpha-D-glucosamine 1-phosphate + CoA + H(+). The enzyme catalyses N-acetyl-alpha-D-glucosamine 1-phosphate + UTP + H(+) = UDP-N-acetyl-alpha-D-glucosamine + diphosphate. The protein operates within nucleotide-sugar biosynthesis; UDP-N-acetyl-alpha-D-glucosamine biosynthesis; N-acetyl-alpha-D-glucosamine 1-phosphate from alpha-D-glucosamine 6-phosphate (route II): step 2/2. It participates in nucleotide-sugar biosynthesis; UDP-N-acetyl-alpha-D-glucosamine biosynthesis; UDP-N-acetyl-alpha-D-glucosamine from N-acetyl-alpha-D-glucosamine 1-phosphate: step 1/1. It functions in the pathway bacterial outer membrane biogenesis; LPS lipid A biosynthesis. In terms of biological role, catalyzes the last two sequential reactions in the de novo biosynthetic pathway for UDP-N-acetylglucosamine (UDP-GlcNAc). The C-terminal domain catalyzes the transfer of acetyl group from acetyl coenzyme A to glucosamine-1-phosphate (GlcN-1-P) to produce N-acetylglucosamine-1-phosphate (GlcNAc-1-P), which is converted into UDP-GlcNAc by the transfer of uridine 5-monophosphate (from uridine 5-triphosphate), a reaction catalyzed by the N-terminal domain. This chain is Bifunctional protein GlmU, found in Dichelobacter nodosus (strain VCS1703A).